The chain runs to 153 residues: Large ribosomal subunit protein uL15 (153 aa).

Positions 1–48 (MRLNELSPAPGSKKDRKRVGRGDAGRGNYSGRGMKGQKARSGGATRPG) are disordered.

It belongs to the universal ribosomal protein uL15 family. In terms of assembly, part of the 50S ribosomal subunit.

In terms of biological role, binds to the 23S rRNA. The protein is Large ribosomal subunit protein uL15 of Dehalococcoides mccartyi (strain ATCC BAA-2266 / KCTC 15142 / 195) (Dehalococcoides ethenogenes (strain 195)).